The following is a 612-amino-acid chain: UvrABC system protein C (612 aa).

Residues 15–93 (HLPGVYRMYD…IKQHQPKYNV (79 aa)) enclose the GIY-YIG domain. Residues 203-238 (SQVIDYLMQKMEIAASELDFETAARFRDQIQSVRAV) enclose the UVR domain.

This sequence belongs to the UvrC family. Interacts with UvrB in an incision complex.

Its subcellular location is the cytoplasm. Its function is as follows. The UvrABC repair system catalyzes the recognition and processing of DNA lesions. UvrC both incises the 5' and 3' sides of the lesion. The N-terminal half is responsible for the 3' incision and the C-terminal half is responsible for the 5' incision. In Haemophilus ducreyi (strain 35000HP / ATCC 700724), this protein is UvrABC system protein C.